A 488-amino-acid chain; its full sequence is Inosine-5'-monophosphate dehydrogenase (488 aa).

CBS domains lie at 93 to 149 (VVTD…NQPV) and 153 to 214 (MTPK…CKDE). NAD(+) is bound by residues D248 and 248 to 250 (DSS). K267 bears the N6-acetyllysine mark. Residue 298-300 (GIG) participates in NAD(+) binding. 2 residues coordinate K(+): G300 and G302. Residue S303 coordinates IMP. Residue C305 coordinates K(+). C305 acts as the Thioimidate intermediate in catalysis. Residues 338 to 340 (DGG), 361 to 362 (GS), and 385 to 389 (YRGMG) contribute to the IMP site. Residue R401 is the Proton acceptor of the active site. E415 contacts IMP. K428 carries the post-translational modification N6-acetyllysine. K(+)-binding residues include E469, S470, and H471.

Belongs to the IMPDH/GMPR family. As to quaternary structure, homotetramer. K(+) is required as a cofactor.

The enzyme catalyses IMP + NAD(+) + H2O = XMP + NADH + H(+). The protein operates within purine metabolism; XMP biosynthesis via de novo pathway; XMP from IMP: step 1/1. Mycophenolic acid (MPA) is a non-competitive inhibitor that prevents formation of the closed enzyme conformation by binding to the same site as the amobile flap. In contrast, mizoribine monophosphate (MZP) is a competitive inhibitor that induces the closed conformation. MPA is a potent inhibitor of mammalian IMPDHs but a poor inhibitor of the bacterial enzymes. MZP is a more potent inhibitor of bacterial IMPDH. In terms of biological role, catalyzes the conversion of inosine 5'-phosphate (IMP) to xanthosine 5'-phosphate (XMP), the first committed and rate-limiting step in the de novo synthesis of guanine nucleotides, and therefore plays an important role in the regulation of cell growth. In Escherichia coli O157:H7, this protein is Inosine-5'-monophosphate dehydrogenase.